We begin with the raw amino-acid sequence, 349 residues long: Draxin (349 aa).

The first 25 residues, 1–25, serve as a signal peptide directing secretion; the sequence is MAASSTFFSPSLFLCVLVLIDITLA. A compositionally biased stretch (polar residues) spans 40-53; it reads NHLQNQETWPQQPR. 3 disordered regions span residues 40 to 63, 119 to 166, and 246 to 273; these read NHLQ…HGLA, PHAE…LYKK, and WPSA…EGEP. Residues 54 to 63 show a composition bias toward basic residues; that stretch reads SGHHHKHGLA. Residues 119-139 show a composition bias toward basic and acidic residues; sequence PHAERENQSPGSERGKKQNRE. 2 stretches are compositionally biased toward basic residues: residues 140–155 and 249–258; these read QRRH…HRGK and AKKKEKRRSK. Asn-264 carries an N-linked (GlcNAc...) asparagine glycan.

This sequence belongs to the draxin family.

The protein localises to the secreted. Chemorepulsive axon guidance protein required for the development of spinal cord and forebrain commissures. Acts as a chemorepulsive guidance protein for commissural axons during development. Able to inhibit or repel neurite outgrowth from dorsal spinal cord and cortical explants in vitro. Binds directly to the neurites and growth cones. The sequence is that of Draxin from Gallus gallus (Chicken).